Here is a 269-residue protein sequence, read N- to C-terminus: Glucosyl-3-phosphoglycerate/mannosyl-3-phosphoglycerate phosphatase (269 aa).

D6 functions as the Nucleophile in the catalytic mechanism. Mg(2+) is bound by residues D6, D8, and D210.

This sequence belongs to the HAD-like hydrolase superfamily. MPGP family. In terms of assembly, monomer. It depends on Co(2+) as a cofactor. Mg(2+) serves as cofactor.

The enzyme catalyses (2R)-2-O-(alpha-D-glucopyranosyl)-3-phospho-glycerate + H2O = (2R)-2-O-(alpha-D-glucopyranosyl)-glycerate + phosphate. The catalysed reaction is 2-O-(alpha-D-mannosyl)-3-phosphoglycerate + H2O = (2R)-2-O-(alpha-D-mannosyl)-glycerate + phosphate. Its function is as follows. Involved in the biosynthesis of glucosylglycerate. Catalyzes the dephosphorylation of glucosyl-3-phosphoglycerate (GPG) and mannosyl-3-phosphoglycerate (MPG) to glucosylglycerate (GG) and mannosylglycerate (MG), respectively. In Persephonella marina (strain DSM 14350 / EX-H1), this protein is Glucosyl-3-phosphoglycerate/mannosyl-3-phosphoglycerate phosphatase.